The primary structure comprises 104 residues: Fluoride-specific ion channel FluC 2 (104 aa).

The next 3 helical transmembrane spans lie at 22–42 (IGPYVGTFIANMAACVVLAAV), 48–68 (LVMAAVGTGFAGALSTWSTLA), and 82–102 (MLLGYTTATILGGMVAVWCGL). Positions 59 and 62 each coordinate Na(+).

It belongs to the fluoride channel Fluc/FEX (TC 1.A.43) family.

It is found in the cell membrane. The enzyme catalyses fluoride(in) = fluoride(out). Its activity is regulated as follows. Na(+) is not transported, but it plays an essential structural role and its presence is essential for fluoride channel function. Its function is as follows. Fluoride-specific ion channel. Important for reducing fluoride concentration in the cell, thus reducing its toxicity. This chain is Fluoride-specific ion channel FluC 2, found in Corynebacterium diphtheriae (strain ATCC 700971 / NCTC 13129 / Biotype gravis).